The sequence spans 1839 residues: Mannuronan C5-epimerase AlgE3 (1839 aa).

8 PbH1 repeats span residues 133–155, 157–179, 180–202, 204–226, 257–279, 280–302, 320–342, and 347–369; these read DRDV…DPHE, TINL…VADY, QVGG…NIVT, TNDF…VVQR, THDV…RVYG, AQDV…YAEV, TTGT…GIQE, and TDYS…RLYG. Residues 372-386 are compositionally biased toward polar residues; that stretch reads STVSEQPSSGQQATL. Residues 372–392 are disordered; the sequence is STVSEQPSSGQQATLEGTAGN. 9 Hemolysin-type calcium-binding repeats span residues 387-399, 406-422, 424-440, 538-550, 557-573, 574-591, 695-709, 714-730, and 732-748; these read EGTA…SGTG, GLAG…DDTL, GGAG…ADTF, TGTE…SGTD, GYGG…NDIL, VGGA…ADVF, EGTD…TGAD, GLGG…DDVL, and GGAE…ADTF. PbH1 repeat units lie at residues 975–997, 999–1021, 1022–1044, 1046–1068, 1099–1121, 1122–1143, 1161–1183, and 1188–1210; these read DRNV…DPHE, TINL…VADY, LVDS…NVVT, TYDF…VIQR, TNNI…RLYG, TEDV…AYAE, TTGT…GIEE, and TDYS…RLNG. The span at 1215–1236 shows a compositional bias: polar residues; the sequence is VSDQPGTGQQATLEGTTGNDTL. Residues 1215 to 1238 form a disordered region; that stretch reads VSDQPGTGQQATLEGTTGNDTLGG. Hemolysin-type calcium-binding repeat units follow at residues 1229–1243, 1247–1263, 1265–1281, 1398–1414, 1415–1432, 1536–1552, 1554–1571, 1670–1681, 1688–1704, and 1706–1722; these read GTTG…DAHE, GLDG…NDIL, GGVG…ADTF, GHAG…DDIL, VGGA…ADVF, EGTA…ADEV, HGGS…ADVF, GGDGNDTLSGGS, GGAG…NDIL, and GGAG…SDIF.

Belongs to the D-mannuronate C5-epimerase family. The cofactor is Ca(2+).

The protein localises to the secreted. It carries out the reaction [(1-&gt;4)-beta-D-mannuronosyl](n) = [alginate](n). The protein operates within glycan biosynthesis; alginate biosynthesis. Its activity is regulated as follows. Inhibited by zinc. Functionally, converts beta-D-mannuronic acid (M) to alpha-L-guluronic acid (G), producing a polymer with gel-forming capacity, required for the formation of the cyst coat. The protein is Mannuronan C5-epimerase AlgE3 of Azotobacter vinelandii.